The primary structure comprises 1186 residues: Pumilio homolog 1 (1186 aa).

Serine 2 carries the post-translational modification N-acetylserine. Serine 19 bears the Phosphoserine mark. The disordered stretch occupies residues 22–73; that stretch reads LKHHPQEPANPNMPVVLTSGTGSQAQPQPAANQALAAGTHSSPVPGSIGVAG. The span at 45 to 58 shows a compositional bias: low complexity; that stretch reads QAQPQPAANQALAA. A phosphoserine mark is found at serine 75, serine 98, and serine 106. The residue at position 112 (threonine 112) is a Phosphothreonine. 5 positions are modified to phosphoserine: serine 124, serine 159, serine 197, serine 209, and serine 229. Residues 233–272 form a disordered region; the sequence is SCLRKGGFGPRDADSDENDKGEKKNKGTFDGDKLGDLKEE. Residues 250–272 show a composition bias toward basic and acidic residues; sequence NDKGEKKNKGTFDGDKLGDLKEE. Serine 305 bears the Phosphoserine mark. Over residues 485–502 the composition is skewed to low complexity; the sequence is TNSANQQTTPQAQQGQQQ. Disordered stretches follow at residues 485–524 and 613–648; these read TNSA…GQQT and AGTT…FYGN. The segment covering 511–524 has biased composition (polar residues); the sequence is RPLTPNQNQQGQQT. Threonine 514 carries the post-translational modification Phosphothreonine. Positions 626–639 are enriched in low complexity; the sequence is QQPQPQPQQQPNNN. Phosphoserine is present on residues serine 709 and serine 714. The tract at residues 742–773 is disordered; it reads GPVGMPLPSQGPGHSQTPPPSLSSHGSSSSLN. A compositionally biased stretch (low complexity) spans 763–773; that stretch reads LSSHGSSSSLN. An Omega-N-methylarginine modification is found at arginine 796. 2 positions are modified to phosphoserine: serine 806 and serine 822. The PUM-HD domain occupies 828-1168; the sequence is GRSRLLEDFR…HILAKLEKYY (341 aa). 8 Pumilio repeats span residues 848-883, 884-919, 920-955, 956-991, 992-1027, 1028-1063, 1064-1099, and 1103-1142; these read EIAG…LVFN, EILQ…ALAE, RIRG…EMVR, ELDG…FIID, AFKG…PILE, ELHQ…KIVA, EIRG…VLID, and TMND…IVMH. The adenine-nucleotide binding in RNA target stretch occupies residues 863-867; that stretch reads SRFIQ. Residues 899–903 form a uracil-nucleotide binding in RNA target region; the sequence is NYVIQ. Positions 935-939 are adenine-nucleotide binding in RNA target; that stretch reads CRVIQ. Residues 971–975 form a non-specific-nucleotide binding in RNA target region; it reads NHVVQ. The segment at 1007–1011 is adenine-nucleotide binding in RNA target; that stretch reads CRVIQ. A uracil-nucleotide binding in RNA target region spans residues 1043–1047; that stretch reads NYVIQ. The tract at residues 1079–1083 is guanine-nucleotide binding in RNA target; sequence SNVVE. The tract at residues 1122–1126 is uracil-nucleotide binding in RNA target; sequence NYVVQ.

Recruits the CCR4-POP2-NOT deadenylase leading to translational inhibition and mRNA degradation. In case of viral infection, interacts with DHX58. Interacts with TRIM71 (via NHL repeats) in an RNA-dependent manner. Post-translationally, phosphorylation at Ser-714 promotes RNA-binding activity. Following growth factor stimulation phosphorylated at Ser-714, promoting binding to the 3'-UTR of CDKN1B/p27 mRNA. As to expression, expressed in brain, heart, kidney, muscle, intestine and stomach. Not expressed in cerebellum, corpus callosum, caudate nucleus, hippocampus, medulla oblongata and putamen. Expressed in all fetal tissues tested.

It localises to the cytoplasm. The protein resides in the P-body. The protein localises to the cytoplasmic granule. Its function is as follows. Sequence-specific RNA-binding protein that acts as a post-transcriptional repressor by binding the 3'-UTR of mRNA targets. Binds to an RNA consensus sequence, the Pumilio Response Element (PRE), 5'-UGUANAUA-3', that is related to the Nanos Response Element (NRE). Mediates post-transcriptional repression of transcripts via different mechanisms: acts via direct recruitment of the CCR4-POP2-NOT deadenylase leading to translational inhibition and mRNA degradation. Also mediates deadenylation-independent repression by promoting accessibility of miRNAs. Following growth factor stimulation, phosphorylated and binds to the 3'-UTR of CDKN1B/p27 mRNA, inducing a local conformational change that exposes miRNA-binding sites, promoting association of miR-221 and miR-222, efficient suppression of CDKN1B/p27 expression, and rapid entry to the cell cycle. Acts as a post-transcriptional repressor of E2F3 mRNAs by binding to its 3'-UTR and facilitating miRNA regulation. Represses a program of genes necessary to maintain genomic stability such as key mitotic, DNA repair and DNA replication factors. Its ability to repress those target mRNAs is regulated by the lncRNA NORAD (non-coding RNA activated by DNA damage) which, due to its high abundance and multitude of PUMILIO binding sites, is able to sequester a significant fraction of PUM1 and PUM2 in the cytoplasm. Involved in neuronal functions by regulating ATXN1 mRNA levels: acts by binding to the 3'-UTR of ATXN1 transcripts, leading to their down-regulation independently of the miRNA machinery. Plays a role in cytoplasmic sensing of viral infection. In testis, acts as a post-transcriptional regulator of spermatogenesis by binding to the 3'-UTR of mRNAs coding for regulators of p53/TP53. Involved in embryonic stem cell renewal by facilitating the exit from the ground state: acts by targeting mRNAs coding for naive pluripotency transcription factors and accelerates their down-regulation at the onset of differentiation. Binds specifically to miRNA MIR199A precursor, with PUM2, regulates miRNA MIR199A expression at a postranscriptional level. This chain is Pumilio homolog 1, found in Homo sapiens (Human).